The following is a 398-amino-acid chain: Lysophospholipid transporter LplT (398 aa).

11 helical membrane passes run 17 to 37 (AVLV…FAIL), 52 to 72 (ILQI…GQIA), 90 to 110 (LGAF…LVGV), 137 to 157 (GLME…GGFL), 163 to 183 (AIAL…NFFI), 226 to 246 (LFWG…PVVL), 256 to 276 (ILNV…ARFI), 285 to 305 (MPAG…HSIW), 309 to 329 (VLLI…NALL), 352 to 372 (IAML…VPVV), and 373 to 393 (TTGI…WIWN).

The protein belongs to the major facilitator superfamily. LplT (TC 2.A.1.42) family.

It localises to the cell inner membrane. In terms of biological role, catalyzes the facilitated diffusion of 2-acyl-glycero-3-phosphoethanolamine (2-acyl-GPE) into the cell. This Photorhabdus laumondii subsp. laumondii (strain DSM 15139 / CIP 105565 / TT01) (Photorhabdus luminescens subsp. laumondii) protein is Lysophospholipid transporter LplT.